We begin with the raw amino-acid sequence, 267 residues long: Ribosomal RNA small subunit methyltransferase J (267 aa).

S-adenosyl-L-methionine is bound by residues 133 to 134 (ER) and Asp-187.

This sequence belongs to the methyltransferase superfamily. RsmJ family.

It is found in the cytoplasm. It carries out the reaction guanosine(1516) in 16S rRNA + S-adenosyl-L-methionine = N(2)-methylguanosine(1516) in 16S rRNA + S-adenosyl-L-homocysteine + H(+). In terms of biological role, specifically methylates the guanosine in position 1516 of 16S rRNA. In Halorhodospira halophila (strain DSM 244 / SL1) (Ectothiorhodospira halophila (strain DSM 244 / SL1)), this protein is Ribosomal RNA small subunit methyltransferase J.